The chain runs to 228 residues: Aspartate racemase (228 aa).

Position 47 to 49 (47 to 49) interacts with substrate; the sequence is DRT. The active-site Proton donor/acceptor is cysteine 82. Substrate is bound by residues 83 to 85 and lysine 164; that span reads NTA. The active-site Proton donor/acceptor is the cysteine 194.

Belongs to the aspartate/glutamate racemases family. As to quaternary structure, homodimer. The existence of the interchain disulfide bond seen in the crystal structures is uncertain, but disulfide bonds have been reported for cytoplasmic proteins from thermophiles.

The catalysed reaction is L-aspartate = D-aspartate. Its activity is regulated as follows. Weakly inhibited by citrate, but not by asparagine. The protein is Aspartate racemase of Pyrococcus horikoshii (strain ATCC 700860 / DSM 12428 / JCM 9974 / NBRC 100139 / OT-3).